The sequence spans 899 residues: AP-3 complex subunit delta (899 aa).

HEAT repeat units lie at residues 37–74, 155–192, 194–229, 231–267, 268–305, 308–344, 345–382, 384–428, 480–518, 536–580, 590–613, and 614–656; these read QSPE…KLTY, ELAR…QYPE, LRDN…HNPQ, FIQL…IEPK, LRVK…LNSD, DSAV…KINT, DFIA…EDNL, DFVQ…ITAM, RTLA…LLDN, ELQQ…LIIS, SEAL…SLPL, and LLTE…TESE. 4 disordered regions span residues 668–701, 741–768, 782–801, and 849–899; these read DGIV…PTHE, NLSN…KKKK, GVNT…SARN, and AAEE…LTTE. Residues 743–759 are compositionally biased toward low complexity; sequence SNSKPSSSGSLVRLSSE. Residues 841-862 are a coiled coil; that stretch reads QRLLDESAAAEEEVVVVKKKKR. Over residues 857–880 the composition is skewed to basic residues; sequence VKKKKRSKDGSKSSKKKSRSKSKP.

It belongs to the adaptor complexes large subunit family. In terms of assembly, adaptor protein complex 3 (AP-3) is a heterotetramer composed of 2 large adaptins (APL5 and APL6), a medium adaptin (APM3) and a small adaptin (APS3).

The protein resides in the golgi apparatus. The protein localises to the cytoplasmic vesicle. Its subcellular location is the clathrin-coated vesicle membrane. Functionally, part of the AP-3 complex, an adaptor-related complex which is not clathrin-associated. The complex is associated with the Golgi region as well as more peripheral structures. It facilitates the budding of vesicles from the Golgi membrane and may be directly involved in trafficking to the vacuole. This Eremothecium gossypii (strain ATCC 10895 / CBS 109.51 / FGSC 9923 / NRRL Y-1056) (Yeast) protein is AP-3 complex subunit delta (APL5).